A 330-amino-acid chain; its full sequence is Small ribosomal subunit protein uS15m (330 aa).

It belongs to the universal ribosomal protein uS15 family. Component of the mitochondrial ribosome small subunit (28S) which comprises a 12S rRNA and about 30 distinct proteins.

It localises to the mitochondrion. The chain is Small ribosomal subunit protein uS15m (mrps-15) from Caenorhabditis elegans.